A 238-amino-acid polypeptide reads, in one-letter code: Uridylate kinase (238 aa).

12–15 provides a ligand contact to ATP; it reads KLSG. An involved in allosteric activation by GTP region spans residues 20-25; it reads GQQGFG. Gly54 is a binding site for UMP. ATP contacts are provided by Gly55 and Arg59. UMP is bound by residues Asp74 and 135-142; that span reads TGNPFFTT. 4 residues coordinate ATP: Thr162, Asn163, Tyr168, and Asp171.

It belongs to the UMP kinase family. In terms of assembly, homohexamer.

The protein localises to the cytoplasm. The enzyme catalyses UMP + ATP = UDP + ADP. It participates in pyrimidine metabolism; CTP biosynthesis via de novo pathway; UDP from UMP (UMPK route): step 1/1. Its activity is regulated as follows. Allosterically activated by GTP. Inhibited by UTP. Catalyzes the reversible phosphorylation of UMP to UDP. In Bradyrhizobium diazoefficiens (strain JCM 10833 / BCRC 13528 / IAM 13628 / NBRC 14792 / USDA 110), this protein is Uridylate kinase.